Consider the following 363-residue polypeptide: 3-isopropylmalate dehydrogenase (363 aa).

78 to 91 contacts NAD(+); the sequence is GPKWENLPPESQPE. Positions 99, 109, 138, and 227 each coordinate substrate. Asp-227, Asp-251, and Asp-255 together coordinate Mg(2+). Residue 285-297 participates in NAD(+) binding; the sequence is GSAPDIAGKNIAN.

The protein belongs to the isocitrate and isopropylmalate dehydrogenases family. LeuB type 1 subfamily. As to quaternary structure, homodimer. Requires Mg(2+) as cofactor. Mn(2+) serves as cofactor.

The protein localises to the cytoplasm. The catalysed reaction is (2R,3S)-3-isopropylmalate + NAD(+) = 4-methyl-2-oxopentanoate + CO2 + NADH. Its pathway is amino-acid biosynthesis; L-leucine biosynthesis; L-leucine from 3-methyl-2-oxobutanoate: step 3/4. Catalyzes the oxidation of 3-carboxy-2-hydroxy-4-methylpentanoate (3-isopropylmalate) to 3-carboxy-4-methyl-2-oxopentanoate. The product decarboxylates to 4-methyl-2 oxopentanoate. This Salmonella typhi protein is 3-isopropylmalate dehydrogenase.